A 388-amino-acid polypeptide reads, in one-letter code: Chorismate synthase (388 aa).

NADP(+)-binding residues include Arg-39 and Arg-45. Positions 95 to 118 (EKNEKSRRVSRPRPGHADLVGGMK) are disordered. FMN is bound by residues 130-132 (RSS), 251-252 (NA), Gly-296, 311-315 (KPIPT), and Arg-337.

Belongs to the chorismate synthase family. As to quaternary structure, homotetramer. Requires FMNH2 as cofactor.

The enzyme catalyses 5-O-(1-carboxyvinyl)-3-phosphoshikimate = chorismate + phosphate. Its pathway is metabolic intermediate biosynthesis; chorismate biosynthesis; chorismate from D-erythrose 4-phosphate and phosphoenolpyruvate: step 7/7. Catalyzes the anti-1,4-elimination of the C-3 phosphate and the C-6 proR hydrogen from 5-enolpyruvylshikimate-3-phosphate (EPSP) to yield chorismate, which is the branch point compound that serves as the starting substrate for the three terminal pathways of aromatic amino acid biosynthesis. This reaction introduces a second double bond into the aromatic ring system. The protein is Chorismate synthase of Listeria monocytogenes serotype 4b (strain CLIP80459).